A 785-amino-acid polypeptide reads, in one-letter code: Copal-8-ol diphosphate hydratase TPSSA3, chloroplastic (785 aa).

Arg240 provides a ligand contact to substrate. Mg(2+) is bound by residues Asp372 and Asp374. The DXDD motif signature appears at 372–375; sequence DIDD. Arg459 contacts substrate.

Belongs to the terpene synthase family. Requires Mg(2+) as cofactor.

It localises to the plastid. Its subcellular location is the chloroplast. It catalyses the reaction (2E,6E,10E)-geranylgeranyl diphosphate + H2O = 8-hydroxycopalyl diphosphate. It participates in secondary metabolite biosynthesis; terpenoid biosynthesis. Involved in the biosynthesis of labdane-type diterpenoid including sclareol, a diterpene-diol that is used as fragrance and flavoring, and has anticancer effects (able to kill leukemic and colon cancer cells by apoptosis). Sclareol can also be used as synthesis precursor of ambergris substitution fragance products such as ambrox. Terpene synthase that produces 8-hydroxycopalyl diphosphate from geranylgeranyl diphosphate (GGPP). This is Copal-8-ol diphosphate hydratase TPSSA3, chloroplastic from Salvia sclarea (Clary sage).